Consider the following 81-residue polypeptide: Small ribosomal subunit protein bS16 (81 aa).

Belongs to the bacterial ribosomal protein bS16 family.

The polypeptide is Small ribosomal subunit protein bS16 (Clostridium acetobutylicum (strain ATCC 824 / DSM 792 / JCM 1419 / IAM 19013 / LMG 5710 / NBRC 13948 / NRRL B-527 / VKM B-1787 / 2291 / W)).